Reading from the N-terminus, the 89-residue chain is Small ribosomal subunit protein bS20 (89 aa).

The interval 1–21 (MANSAQAKKRARQNVKARKHN) is disordered. The segment covering 7 to 21 (AKKRARQNVKARKHN) has biased composition (basic residues).

It belongs to the bacterial ribosomal protein bS20 family.

Binds directly to 16S ribosomal RNA. The protein is Small ribosomal subunit protein bS20 of Acinetobacter baylyi (strain ATCC 33305 / BD413 / ADP1).